We begin with the raw amino-acid sequence, 374 residues long: Putative F-box protein At5g60060 (374 aa).

In terms of domain architecture, F-box spans 9 to 61 (SQWSDLPLDILELISDRLDHDSSDTIHLLCLRSVCATWRLSLPLSNKNNRLSK).

The chain is Putative F-box protein At5g60060 from Arabidopsis thaliana (Mouse-ear cress).